The primary structure comprises 56 residues: Preprotein translocase subunit SecG (56 aa).

The Cytoplasmic portion of the chain corresponds to 1-30 (MARKDKKTLPASGAGIVRYFNDDTAGVKLS). A helical membrane pass occupies residues 31 to 52 (PKQVVIGTIIVALICIALRFTT). Residues 53 to 56 (SVGY) are Extracellular-facing.

The protein belongs to the SEC61-beta family. In terms of assembly, component of the protein translocase complex. Heterotrimer consisting of alpha (SecY), beta (SecG) and gamma (SecE) subunits. Can form oligomers of the heterotrimer.

It is found in the cell membrane. Involved in protein export. The function of the beta subunit is unknown, but it may be involved in stabilization of the trimeric complex. This chain is Preprotein translocase subunit SecG, found in Methanosphaera stadtmanae (strain ATCC 43021 / DSM 3091 / JCM 11832 / MCB-3).